A 447-amino-acid chain; its full sequence is Alliin lyase (447 aa).

Positions 1 to 2 are excised as a propeptide; sequence QA. Positions 15-61 constitute an EGF-like; atypical domain; the sequence is EAVANINCSGHGRAFLDGILSDGSPKCECNTCYTGADCSQKITGCSA. N-linked (GlcNAc...) asparagine glycosylation is present at N21. 3 disulfide bridges follow: C22/C41, C43/C52, and C46/C59. 94–102 contacts chloride; it reads YFFNPVSNF. Residues N148 and N193 are each glycosylated (N-linked (GlcNAc...) asparagine). N6-(pyridoxal phosphate)lysine is present on K253. An N-linked (GlcNAc...) asparagine glycan is attached at N330. Residues C370 and C378 are joined by a disulfide bond.

This sequence belongs to the alliinase family. Homodimer. Pyridoxal 5'-phosphate serves as cofactor.

It is found in the vacuole. The enzyme catalyses an S-alkyl-L-cysteine S-oxide = an S-alkyl sulfenate + 2-aminoprop-2-enoate. This Allium cepa var. aggregatum (Shallot) protein is Alliin lyase.